We begin with the raw amino-acid sequence, 458 residues long: Cobyrinate a,c-diamide synthase (458 aa).

The 192-residue stretch at Lys254–Ser445 folds into the GATase cobBQ-type domain. The Nucleophile role is filled by Cys335.

Belongs to the CobB/CbiA family. It depends on Mg(2+) as a cofactor.

The catalysed reaction is cob(II)yrinate + 2 L-glutamine + 2 ATP + 2 H2O = cob(II)yrinate a,c diamide + 2 L-glutamate + 2 ADP + 2 phosphate + 2 H(+). It functions in the pathway cofactor biosynthesis; adenosylcobalamin biosynthesis; cob(II)yrinate a,c-diamide from sirohydrochlorin (anaerobic route): step 10/10. Catalyzes the ATP-dependent amidation of the two carboxylate groups at positions a and c of cobyrinate, using either L-glutamine or ammonia as the nitrogen source. The chain is Cobyrinate a,c-diamide synthase from Archaeoglobus fulgidus (strain ATCC 49558 / DSM 4304 / JCM 9628 / NBRC 100126 / VC-16).